Reading from the N-terminus, the 115-residue chain is Large ribosomal subunit protein bL20 (115 aa).

This sequence belongs to the bacterial ribosomal protein bL20 family.

Binds directly to 23S ribosomal RNA and is necessary for the in vitro assembly process of the 50S ribosomal subunit. It is not involved in the protein synthesizing functions of that subunit. The sequence is that of Large ribosomal subunit protein bL20 from Chlorobium luteolum (strain DSM 273 / BCRC 81028 / 2530) (Pelodictyon luteolum).